The following is a 185-amino-acid chain: MDAFSLKKDNRKKFQDKQKLKRKHATPSDRKYRLLNRQKEEKATTEEKDQDQEQPALKSNEDRYYEDPVLEDPHSAVANAELNKVLKDVLKNRLQQNDDATAVNNVANKDTLKIKDLKQMNTDELNRWLGRQNTTSAITAAEPESLVVPIHVQGDHDRAGKKISAPSTDLPEELETDQDFLDGLL.

Methionine 1 bears the N-acetylmethionine mark. 3 stretches are compositionally biased toward basic and acidic residues: residues 1–18 (MDAF…QDKQ), 26–47 (TPSD…TTEE), and 59–71 (SNED…PVLE). 2 disordered regions span residues 1–71 (MDAF…PVLE) and 155–185 (DHDR…DGLL). Residues 170–185 (LPEELETDQDFLDGLL) show a composition bias toward acidic residues.

This is an uncharacterized protein from Saccharomyces cerevisiae (strain ATCC 204508 / S288c) (Baker's yeast).